The sequence spans 1209 residues: 3',5'-cyclic-AMP phosphodiesterase, isoform I (1209 aa).

7 disordered regions span residues 16-35 (NVAK…GSGT), 59-82 (GGGS…KRKS), 275-353 (LYSG…PLPP), 372-403 (SATS…SPRI), 442-498 (ETLA…MQAE), 626-655 (VPAS…LSQG), and 754-792 (SAGQ…RLPT). 2 stretches are compositionally biased toward gly residues: residues 25-35 (SSNGTGNGSGT) and 59-77 (GGGS…GSGS). The segment covering 275–290 (LYSGSNPSTNPCQSAV) has biased composition (polar residues). Residues 291–314 (QNQGQNSNPNPNQNPNTNPNQNQQ) are compositionally biased toward low complexity. A compositionally biased stretch (polar residues) spans 315 to 324 (RCSCQPQTSP). The span at 372–383 (SATSSSAGTVPP) shows a compositional bias: low complexity. Residues 385–400 (GQQTQEYIAGTSSTPS) are compositionally biased toward polar residues. 2 stretches are compositionally biased toward low complexity: residues 445–462 (ASSS…NSSS) and 472–483 (TSSSASALATSH). 2 stretches are compositionally biased toward polar residues: residues 484 to 498 (PSNS…MQAE) and 627 to 645 (PASN…SRSG). A PDEase domain is found at 795 to 1124 (VETPRENELG…DYYQSMIPPS (330 aa)). Catalysis depends on His-871, which acts as the Proton donor. 871–875 (HNSLH) provides a ligand contact to 3',5'-cyclic AMP. Residues His-875, His-911, Asp-912, and Asp-1029 each contribute to the a divalent metal cation site. 3',5'-cyclic AMP is bound by residues Asp-912, Asp-1029, and Gln-1080. Residues 1146-1163 (EESDQENLAELEEGDESG) are compositionally biased toward acidic residues. The segment at 1146–1209 (EESDQENLAE…CQNQPQHGGM (64 aa)) is disordered. The span at 1164-1181 (GESTTTGTTGTTAASALS) shows a compositional bias: low complexity. The span at 1182–1193 (GAGGGGGGGGGM) shows a compositional bias: gly residues. The segment covering 1199 to 1209 (GCQNQPQHGGM) has biased composition (polar residues).

It belongs to the cyclic nucleotide phosphodiesterase family. PDE4 subfamily. In terms of assembly, monomer. Requires a divalent metal cation as cofactor.

It catalyses the reaction 3',5'-cyclic AMP + H2O = AMP + H(+). Its pathway is purine metabolism; 3',5'-cyclic AMP degradation; AMP from 3',5'-cyclic AMP: step 1/1. In terms of biological role, hydrolyzes the second messenger cAMP, which is a key regulator of many important physiological processes. Vital for female fertility. Required for learning/memory. The polypeptide is 3',5'-cyclic-AMP phosphodiesterase, isoform I (Drosophila melanogaster (Fruit fly)).